The primary structure comprises 211 residues: tRNA (guanine-N(7)-)-methyltransferase (211 aa).

S-adenosyl-L-methionine contacts are provided by glutamate 44, aspartate 69, aspartate 96, and aspartate 118. Aspartate 118 is an active-site residue. Lysine 122 contributes to the substrate binding site. The tract at residues 124-129 is interaction with RNA; the sequence is RHEKRR. Substrate is bound by residues aspartate 154 and 191-194; that span reads TEYE.

The protein belongs to the class I-like SAM-binding methyltransferase superfamily. TrmB family.

The enzyme catalyses guanosine(46) in tRNA + S-adenosyl-L-methionine = N(7)-methylguanosine(46) in tRNA + S-adenosyl-L-homocysteine. The protein operates within tRNA modification; N(7)-methylguanine-tRNA biosynthesis. In terms of biological role, catalyzes the formation of N(7)-methylguanine at position 46 (m7G46) in tRNA. The chain is tRNA (guanine-N(7)-)-methyltransferase from Streptococcus equi subsp. equi (strain 4047).